A 367-amino-acid chain; its full sequence is Alcohol dehydrogenase 2 (367 aa).

Cys48, His74, Cys107, Cys110, Cys113, Cys121, and Cys163 together coordinate Zn(2+). NAD(+) contacts are provided by residues 187 to 193, Asp212, Lys216, 286 to 288, and Arg361; these read GAGGGLG and VGI.

It belongs to the zinc-containing alcohol dehydrogenase family. As to quaternary structure, homotetramer. Requires Zn(2+) as cofactor.

Its subcellular location is the cytoplasm. The enzyme catalyses a primary alcohol + NAD(+) = an aldehyde + NADH + H(+). The catalysed reaction is a secondary alcohol + NAD(+) = a ketone + NADH + H(+). The chain is Alcohol dehydrogenase 2 (alcB) from Emericella nidulans (strain FGSC A4 / ATCC 38163 / CBS 112.46 / NRRL 194 / M139) (Aspergillus nidulans).